A 524-amino-acid polypeptide reads, in one-letter code: Protopine 6-monooxygenase (524 aa).

3 helical membrane passes run 4–24, 232–252, and 319–339; these read LMLA…VFLY, LASL…DIFQ, and MIMG…SLLM. Residue Cys462 participates in heme binding.

It belongs to the cytochrome P450 family. Heme is required as a cofactor.

The protein resides in the endoplasmic reticulum membrane. The enzyme catalyses protopine + reduced [NADPH--hemoprotein reductase] + O2 = 6-hydroxyprotopine + oxidized [NADPH--hemoprotein reductase] + H2O + H(+). It participates in alkaloid biosynthesis. Functionally, catalyzes the conversion of protopine and allocryptopine to dihydrosanguinarine and dihydrochelerythrine, respectively, in the biosynthesis of isoquinoline alkaloid sanguinarine. The protein is Protopine 6-monooxygenase (CYP82N2v2) of Eschscholzia californica (California poppy).